The following is a 457-amino-acid chain: Argininosuccinate lyase (457 aa).

It belongs to the lyase 1 family. Argininosuccinate lyase subfamily.

The protein localises to the cytoplasm. It catalyses the reaction 2-(N(omega)-L-arginino)succinate = fumarate + L-arginine. The protein operates within amino-acid biosynthesis; L-arginine biosynthesis; L-arginine from L-ornithine and carbamoyl phosphate: step 3/3. In Citrobacter koseri (strain ATCC BAA-895 / CDC 4225-83 / SGSC4696), this protein is Argininosuccinate lyase.